A 689-amino-acid chain; its full sequence is Elongation factor G (689 aa).

The 275-residue stretch at 8-282 folds into the tr-type G domain; it reads LNTRNIGIMA…AVVDYLPSPL (275 aa). GTP-binding positions include 17–24, 81–85, and 135–138; these read AHIDAGKT, DTPGH, and NKMD.

The protein belongs to the TRAFAC class translation factor GTPase superfamily. Classic translation factor GTPase family. EF-G/EF-2 subfamily.

It localises to the cytoplasm. Catalyzes the GTP-dependent ribosomal translocation step during translation elongation. During this step, the ribosome changes from the pre-translocational (PRE) to the post-translocational (POST) state as the newly formed A-site-bound peptidyl-tRNA and P-site-bound deacylated tRNA move to the P and E sites, respectively. Catalyzes the coordinated movement of the two tRNA molecules, the mRNA and conformational changes in the ribosome. In Mycoplasma mycoides subsp. mycoides SC (strain CCUG 32753 / NCTC 10114 / PG1), this protein is Elongation factor G.